Consider the following 172-residue polypeptide: Thioredoxin M-type, chloroplastic (172 aa).

The transit peptide at 1 to 60 (MALESLFKSIHTKTSLSSSIVFIFKGKACLLTSKSRIQESFAELNSFTSLVLLIENHVLL) directs the protein to the chloroplast. Residues 61–172 (HAREAVNEVQ…TLSEKVEKYI (112 aa)) form the Thioredoxin domain. Active-site nucleophile residues include C97 and C100. A disulfide bridge connects residues C97 and C100.

It belongs to the thioredoxin family. Plant M-type subfamily. As to quaternary structure, forms a complex with heterodimeric ferredoxin-thioredoxin reductase (FTR) and ferredoxin.

Its subcellular location is the plastid. The protein resides in the chloroplast. Functionally, participates in various redox reactions through the reversible oxidation of the active center dithiol to a disulfide. The M form is known to activate NADP-malate dehydrogenase. This is Thioredoxin M-type, chloroplastic from Pisum sativum (Garden pea).